We begin with the raw amino-acid sequence, 209 residues long: Octanoyltransferase (209 aa).

In terms of domain architecture, BPL/LPL catalytic spans 30 to 209 (DNEPEIVYLV…IQTEFNKIFK (180 aa)). Substrate is bound by residues 69–76 (RGGKFTFH), 143–145 (AIG), and 156–158 (GIA). The active-site Acyl-thioester intermediate is the cysteine 174.

This sequence belongs to the LipB family.

It localises to the cytoplasm. The catalysed reaction is octanoyl-[ACP] + L-lysyl-[protein] = N(6)-octanoyl-L-lysyl-[protein] + holo-[ACP] + H(+). Its pathway is protein modification; protein lipoylation via endogenous pathway; protein N(6)-(lipoyl)lysine from octanoyl-[acyl-carrier-protein]: step 1/2. Its function is as follows. Catalyzes the transfer of endogenously produced octanoic acid from octanoyl-acyl-carrier-protein onto the lipoyl domains of lipoate-dependent enzymes. Lipoyl-ACP can also act as a substrate although octanoyl-ACP is likely to be the physiological substrate. This Rickettsia prowazekii (strain Madrid E) protein is Octanoyltransferase.